We begin with the raw amino-acid sequence, 256 residues long: 4-hydroxy-tetrahydrodipicolinate reductase (256 aa).

8–13 (GASGKM) provides a ligand contact to NAD(+). An NADP(+)-binding site is contributed by Lys-36. NAD(+) contacts are provided by residues 87 to 89 (GTT) and 111 to 114 (ATNM). His-143 functions as the Proton donor/acceptor in the catalytic mechanism. His-144 contributes to the (S)-2,3,4,5-tetrahydrodipicolinate binding site. Lys-147 (proton donor) is an active-site residue. 153 to 154 (GT) serves as a coordination point for (S)-2,3,4,5-tetrahydrodipicolinate.

The protein belongs to the DapB family.

It localises to the cytoplasm. It catalyses the reaction (S)-2,3,4,5-tetrahydrodipicolinate + NAD(+) + H2O = (2S,4S)-4-hydroxy-2,3,4,5-tetrahydrodipicolinate + NADH + H(+). The enzyme catalyses (S)-2,3,4,5-tetrahydrodipicolinate + NADP(+) + H2O = (2S,4S)-4-hydroxy-2,3,4,5-tetrahydrodipicolinate + NADPH + H(+). It participates in amino-acid biosynthesis; L-lysine biosynthesis via DAP pathway; (S)-tetrahydrodipicolinate from L-aspartate: step 4/4. Its function is as follows. Catalyzes the conversion of 4-hydroxy-tetrahydrodipicolinate (HTPA) to tetrahydrodipicolinate. The protein is 4-hydroxy-tetrahydrodipicolinate reductase of Campylobacter concisus (strain 13826).